Reading from the N-terminus, the 171-residue chain is Endoribonuclease YbeY (171 aa).

His-126, His-130, and His-136 together coordinate Zn(2+).

This sequence belongs to the endoribonuclease YbeY family. It depends on Zn(2+) as a cofactor.

It is found in the cytoplasm. In terms of biological role, single strand-specific metallo-endoribonuclease involved in late-stage 70S ribosome quality control and in maturation of the 3' terminus of the 16S rRNA. The protein is Endoribonuclease YbeY of Rhizobium johnstonii (strain DSM 114642 / LMG 32736 / 3841) (Rhizobium leguminosarum bv. viciae).